We begin with the raw amino-acid sequence, 281 residues long: MNGSFTVKKVLNNNVLIASHHKYSEVVLIGKGIGFGKKQDDVIEDKGYDKMFILKDEKEQKQFKKLLDYVDEKLVDISNDVIYHISNRTNHSLNEHIHIALTDHIAFAIKRQQQGFDMKNPFLMETQSLYPEEYQIAKEVIDMINEKAGLCLPEGEIGFIALHIHSALTNRPLSEVNQHSQLMAQLVEVIEDSFQMKVNKESVNYLRLIRHIRFTIERIKKEEPTKEPEKLMLLLKNEYPLCYNTAWKLIKILQQTLKKPVHEAEAVYLTLHLYRLTNKIS.

Positions 1–60 (MNGSFTVKKVLNNNVLIASHHKYSEVVLIGKGIGFGKKQDDVIEDKGYDKMFILKDEKEQ) are RNA binding. PRD domains lie at 69-174 (YVDE…RPLS) and 175-278 (EVNQ…RLTN). A phosphohistidine; by EII-Glc mark is found at H104 and H163. H211 carries the post-translational modification Phosphohistidine; by HPr.

The protein belongs to the transcriptional antiterminator BglG family. GlcT subfamily. Homodimer. The monomeric form probably also exists but it would be inactive in RNA binding and antitermination. Post-translationally, phosphorylated by HPr (PtsH) and EII-Glc (PtsG). HPr phosphorylates the PRD 2 domain which has a slight stimulatory effect on GlcT activity, while EII-Glc phosphorylates the PRD 1 domain which inactivates GlcT. The phosphorylation is dependent on the presence or absence of glucose which acts as an inducer of the ptsGHI operon expression. In the presence of glucose the phosphoryl group is transferred from phosphorylated HPr to the sugar via EII-Glc. Under these conditions GlcT is not phosphorylated and binds to the RAT sequence, thus allowing transcription of the ptsGHI operon. In the absence of glucose, phosphorylated EII-Glc accumulates in the cell and phosphorylates the PRD 1 domain of GlcT, leading to its inactivation; this phosphorylation may prevent dimerization of GlcT.

Mediates the positive regulation of the glucose PTS operon (ptsGHI) by functioning as an antiterminator factor of transcription via its interaction with the RNA-antiterminator (RAT) sequence located upstream of the ptsG gene. The RNA-binding domain of GlcT directly binds to the RNA antiterminator (RAT) sequence and prevents transcriptional termination. GlcT binding requires two identical and nearly symmetrical triple base pairings in the RAT sequence. This chain is PtsGHI operon antiterminator (glcT), found in Bacillus subtilis (strain 168).